A 99-amino-acid polypeptide reads, in one-letter code: NADH-ubiquinone oxidoreductase chain 2 (99 aa).

2 consecutive transmembrane segments (helical) span residues 22 to 42 (FLTFIGILLSGITAFYYIQII) and 65 to 85 (VMISITTLLLILFFADNSIFI).

It belongs to the complex I subunit 2 family.

It is found in the mitochondrion inner membrane. It catalyses the reaction a ubiquinone + NADH + 5 H(+)(in) = a ubiquinol + NAD(+) + 4 H(+)(out). In terms of biological role, core subunit of the mitochondrial membrane respiratory chain NADH dehydrogenase (Complex I) that is believed to belong to the minimal assembly required for catalysis. Complex I functions in the transfer of electrons from NADH to the respiratory chain. The immediate electron acceptor for the enzyme is believed to be ubiquinone. The polypeptide is NADH-ubiquinone oxidoreductase chain 2 (ND2) (Cyanidium caldarium (Red alga)).